A 188-amino-acid chain; its full sequence is Large ribosomal subunit protein eL18z (188 aa).

The protein belongs to the eukaryotic ribosomal protein eL18 family.

This Arabidopsis thaliana (Mouse-ear cress) protein is Large ribosomal subunit protein eL18z (RPL18A).